The following is a 158-amino-acid chain: RNA pyrophosphohydrolase (158 aa).

The Nudix hydrolase domain maps to 9–151 (PLRNGVGIVV…KLHVYKDVKE (143 aa)). The short motif at 43–64 (GGVDKGEDYLTAAYRELEEETS) is the Nudix box element.

This sequence belongs to the Nudix hydrolase family. RppH subfamily. It depends on a divalent metal cation as a cofactor.

Functionally, accelerates the degradation of transcripts by removing pyrophosphate from the 5'-end of triphosphorylated RNA, leading to a more labile monophosphorylated state that can stimulate subsequent ribonuclease cleavage. This chain is RNA pyrophosphohydrolase, found in Pelagibacter ubique (strain HTCC1062).